Here is a 249-residue protein sequence, read N- to C-terminus: ATP synthase subunit a (249 aa).

The next 5 helical transmembrane spans lie at 35–55 (ILLT…ISSL), 92–112 (VPFI…GALV), 131–151 (INTT…AGIS), 187–209 (LFGN…PLFI), and 221–241 (SAIQ…EALE).

The protein belongs to the ATPase A chain family. As to quaternary structure, F-type ATPases have 2 components, CF(1) - the catalytic core - and CF(0) - the membrane proton channel. CF(1) has five subunits: alpha(3), beta(3), gamma(1), delta(1), epsilon(1). CF(0) has four main subunits: a, b, b' and c.

It is found in the cellular thylakoid membrane. Its function is as follows. Key component of the proton channel; it plays a direct role in the translocation of protons across the membrane. This is ATP synthase subunit a from Trichodesmium erythraeum (strain IMS101).